The primary structure comprises 61 residues: Putative antitoxin VapB21 (61 aa).

This sequence belongs to the UPF0165 family.

Possibly the antitoxin component of a type II toxin-antitoxin (TA) system. Its cognate toxin is VapC21 (Potential). The sequence is that of Putative antitoxin VapB21 (vapB21) from Archaeoglobus fulgidus (strain ATCC 49558 / DSM 4304 / JCM 9628 / NBRC 100126 / VC-16).